A 20-amino-acid chain; its full sequence is T cell receptor alpha joining 42 (20 aa).

The tract at residues 1 to 20 (YGGSQGNLIFGKGTKLSVKP) is disordered.

In terms of assembly, alpha-beta TR is a heterodimer composed of an alpha and beta chain; disulfide-linked. The alpha-beta TR is associated with the transmembrane signaling CD3 coreceptor proteins to form the TR-CD3 (TcR or TCR). The assembly of alpha-beta TR heterodimers with CD3 occurs in the endoplasmic reticulum where a single alpha-beta TR heterodimer associates with one CD3D-CD3E heterodimer, one CD3G-CD3E heterodimer and one CD247 homodimer forming a stable octameric structure. CD3D-CD3E and CD3G-CD3E heterodimers preferentially associate with TR alpha and TR beta chains, respectively. The association of the CD247 homodimer is the last step of TcR assembly in the endoplasmic reticulum and is required for transport to the cell surface.

Its subcellular location is the cell membrane. J region of the variable domain of T cell receptor (TR) alpha chain that participates in the antigen recognition. Alpha-beta T cell receptors are antigen specific receptors which are essential to the immune response and are present on the cell surface of T lymphocytes. Recognize peptide-major histocompatibility (MH) (pMH) complexes that are displayed by antigen presenting cells (APC), a prerequisite for efficient T cell adaptive immunity against pathogens. Binding of alpha-beta TR to pMH complex initiates TR-CD3 clustering on the cell surface and intracellular activation of LCK that phosphorylates the ITAM motifs of CD3G, CD3D, CD3E and CD247 enabling the recruitment of ZAP70. In turn, ZAP70 phosphorylates LAT, which recruits numerous signaling molecules to form the LAT signalosome. The LAT signalosome propagates signal branching to three major signaling pathways, the calcium, the mitogen-activated protein kinase (MAPK) kinase and the nuclear factor NF-kappa-B (NF-kB) pathways, leading to the mobilization of transcription factors that are critical for gene expression and essential for T cell growth and differentiation. The T cell repertoire is generated in the thymus, by V-(D)-J rearrangement. This repertoire is then shaped by intrathymic selection events to generate a peripheral T cell pool of self-MH restricted, non-autoaggressive T cells. Post-thymic interaction of alpha-beta TR with the pMH complexes shapes TR structural and functional avidity. This chain is T cell receptor alpha joining 42, found in Homo sapiens (Human).